The following is a 417-amino-acid chain: Imidazolonepropionase (417 aa).

Fe(3+)-binding residues include His-77 and His-79. Zn(2+) is bound by residues His-77 and His-79. 4-imidazolone-5-propanoate-binding residues include Arg-86, Tyr-149, and His-182. Tyr-149 lines the N-formimidoyl-L-glutamate pocket. His-247 is a binding site for Fe(3+). His-247 is a binding site for Zn(2+). Gln-250 is a binding site for 4-imidazolone-5-propanoate. Position 322 (Asp-322) interacts with Fe(3+). Position 322 (Asp-322) interacts with Zn(2+). Residues Asn-324 and Gly-326 each coordinate N-formimidoyl-L-glutamate. Position 327 (Thr-327) interacts with 4-imidazolone-5-propanoate.

It belongs to the metallo-dependent hydrolases superfamily. HutI family. Zn(2+) is required as a cofactor. It depends on Fe(3+) as a cofactor.

Its subcellular location is the cytoplasm. It catalyses the reaction 4-imidazolone-5-propanoate + H2O = N-formimidoyl-L-glutamate. It functions in the pathway amino-acid degradation; L-histidine degradation into L-glutamate; N-formimidoyl-L-glutamate from L-histidine: step 3/3. Catalyzes the hydrolytic cleavage of the carbon-nitrogen bond in imidazolone-5-propanoate to yield N-formimidoyl-L-glutamate. It is the third step in the universal histidine degradation pathway. The chain is Imidazolonepropionase from Cupriavidus necator (strain ATCC 17699 / DSM 428 / KCTC 22496 / NCIMB 10442 / H16 / Stanier 337) (Ralstonia eutropha).